The following is a 234-amino-acid chain: Two-component response regulator ARR9 (234 aa).

A Response regulatory domain is found at 10-147 (HVLAVDDSLF…DLNKLKPHMM (138 aa)). At aspartate 80 the chain carries 4-aspartylphosphate.

It belongs to the ARR family. Type-A subfamily. Interacts with AHP1 and AHP3. Two-component system major event consists of a His-to-Asp phosphorelay between a sensor histidine kinase (HK) and a response regulator (RR). In plants, the His-to-Asp phosphorelay involves an additional intermediate named Histidine-containing phosphotransfer protein (HPt). This multistep phosphorelay consists of a His-Asp-His-Asp sequential transfer of a phosphate group between first a His and an Asp of the HK protein, followed by the transfer to a conserved His of the HPt protein and finally the transfer to an Asp in the receiver domain of the RR protein. In terms of tissue distribution, predominantly expressed in roots.

The protein localises to the nucleus. Functions as a response regulator involved in His-to-Asp phosphorelay signal transduction system. Phosphorylation of the Asp residue in the receiver domain activates the ability of the protein to promote the transcription of target genes. Type-A response regulators seem to act as negative regulators of the cytokinin signaling. This chain is Two-component response regulator ARR9 (ARR9), found in Arabidopsis thaliana (Mouse-ear cress).